Here is a 476-residue protein sequence, read N- to C-terminus: 3-isopropylmalate dehydratase large subunit (476 aa).

[4Fe-4S] cluster-binding residues include cysteine 347, cysteine 407, and cysteine 410. A disordered region spans residues 418–442; that stretch reads LAPGERSASTSNRNFEGRQGKGGRT.

Belongs to the aconitase/IPM isomerase family. LeuC type 1 subfamily. In terms of assembly, heterodimer of LeuC and LeuD. Requires [4Fe-4S] cluster as cofactor.

The catalysed reaction is (2R,3S)-3-isopropylmalate = (2S)-2-isopropylmalate. Its pathway is amino-acid biosynthesis; L-leucine biosynthesis; L-leucine from 3-methyl-2-oxobutanoate: step 2/4. Catalyzes the isomerization between 2-isopropylmalate and 3-isopropylmalate, via the formation of 2-isopropylmaleate. This Streptomyces coelicolor (strain ATCC BAA-471 / A3(2) / M145) protein is 3-isopropylmalate dehydratase large subunit.